The following is a 222-amino-acid chain: uncharacterized protein (222 aa).

Asn-4, Asn-75, Asn-84, Asn-104, Asn-170, and Asn-175 each carry an N-linked (GlcNAc...) asparagine; by host glycan. A helical membrane pass occupies residues 200 to 220 (LIIIIGIVIILLLIIVMIKTV).

It localises to the membrane. This is an uncharacterized protein from Acanthamoeba polyphaga (Amoeba).